The chain runs to 759 residues: Polyribonucleotide nucleotidyltransferase (759 aa).

Residues Asp522 and Asp528 each coordinate Mg(2+). The 60-residue stretch at 588-647 (PRITTIKVPVDKIGEVIGPKGKMINSITEETGASISIEDDGTVFVGASNGEAAQAAIDKI) folds into the KH domain. The S1 motif domain occupies 659 to 728 (GERFLGTVVK…NRGKISLVLV (70 aa)). The disordered stretch occupies residues 734–759 (AEASDNGSATPSDKAPATADATTAGN). Positions 741–759 (SATPSDKAPATADATTAGN) are enriched in low complexity.

Belongs to the polyribonucleotide nucleotidyltransferase family. Mg(2+) serves as cofactor.

It is found in the cytoplasm. The catalysed reaction is RNA(n+1) + phosphate = RNA(n) + a ribonucleoside 5'-diphosphate. In terms of biological role, involved in mRNA degradation. Catalyzes the phosphorolysis of single-stranded polyribonucleotides processively in the 3'- to 5'-direction. The chain is Polyribonucleotide nucleotidyltransferase from Mycobacterium sp. (strain JLS).